Reading from the N-terminus, the 82-residue chain is 4-(gamma-L-glutamylamino)butanoyl-[BtrI acyl-carrier protein] monooxygenase BtrO (82 aa).

In terms of assembly, homotetramer.

The catalysed reaction is 4-(gamma-L-glutamylamino)butanoyl-[BtrI ACP] + FMNH2 + O2 = 4-(gamma-L-glutamylamino)-(2S)-2-hydroxybutanoyl-[BtrI ACP] + FMN + H2O + H(+). The protein operates within antibiotic biosynthesis; butirosin biosynthesis. Its function is as follows. NAD(P)H:FMN oxidoreductase component of a two-component system involved in the biosynthesis of the side chain of the aminoglycoside antibiotics in the biosynthetic pathway of butirosin. Together with BtrO, mediates hydroxylation of gamma-L-Glu-GABA-S-BtrI. This Niallia circulans (Bacillus circulans) protein is 4-(gamma-L-glutamylamino)butanoyl-[BtrI acyl-carrier protein] monooxygenase BtrO (btrV).